The chain runs to 161 residues: Ribosome maturation factor RimP (161 aa).

This sequence belongs to the RimP family.

It localises to the cytoplasm. Required for maturation of 30S ribosomal subunits. This is Ribosome maturation factor RimP from Myxococcus xanthus (strain DK1622).